The chain runs to 447 residues: Glutamate--tRNA ligase 1 (447 aa).

Positions 10-20 (PSPTGMLHVGN) match the 'HIGH' region motif. The 'KMSKS' region motif lies at 240 to 244 (KISKR). K243 lines the ATP pocket.

This sequence belongs to the class-I aminoacyl-tRNA synthetase family. Glutamate--tRNA ligase type 1 subfamily. In terms of assembly, monomer.

It localises to the cytoplasm. The catalysed reaction is tRNA(Glu) + L-glutamate + ATP = L-glutamyl-tRNA(Glu) + AMP + diphosphate. In terms of biological role, catalyzes the attachment of glutamate to tRNA(Glu) in a two-step reaction: glutamate is first activated by ATP to form Glu-AMP and then transferred to the acceptor end of tRNA(Glu). The sequence is that of Glutamate--tRNA ligase 1 from Rickettsia massiliae (strain Mtu5).